A 282-amino-acid chain; its full sequence is Elongation factor Ts (282 aa).

The segment at 80-83 (TDFV) is involved in Mg(2+) ion dislocation from EF-Tu.

This sequence belongs to the EF-Ts family.

It localises to the cytoplasm. Functionally, associates with the EF-Tu.GDP complex and induces the exchange of GDP to GTP. It remains bound to the aminoacyl-tRNA.EF-Tu.GTP complex up to the GTP hydrolysis stage on the ribosome. This is Elongation factor Ts from Chlamydia trachomatis serovar L2b (strain UCH-1/proctitis).